The following is a 764-amino-acid chain: Zinc finger CCCH domain-containing protein 24 (764 aa).

ANK repeat units lie at residues Glu-108–Arg-138 and Asp-143–Ala-175. The segment at His-321 to Phe-348 adopts a C3H1-type zinc-finger fold. Disordered stretches follow at residues Gln-616 to Val-665 and Lys-698 to Ser-732. Residues Ser-640–Gly-659 are compositionally biased toward low complexity. Residues Gln-705–Gly-716 show a composition bias toward polar residues.

In Oryza sativa subsp. japonica (Rice), this protein is Zinc finger CCCH domain-containing protein 24.